We begin with the raw amino-acid sequence, 510 residues long: Glycerol kinase (510 aa).

Position 13 (Thr13) interacts with ADP. ATP-binding residues include Thr13 and Thr14. Thr13 is a binding site for sn-glycerol 3-phosphate. Arg17 lines the ADP pocket. Arg83, Glu84, Tyr135, and Asp255 together coordinate sn-glycerol 3-phosphate. Glycerol-binding residues include Arg83, Glu84, Tyr135, Asp255, and Gln256. Residues Thr277, Gly321, Gly421, and Asn425 each contribute to the ADP site. 3 residues coordinate ATP: Thr277, Gly321, and Gly421.

It belongs to the FGGY kinase family.

It catalyses the reaction glycerol + ATP = sn-glycerol 3-phosphate + ADP + H(+). It functions in the pathway polyol metabolism; glycerol degradation via glycerol kinase pathway; sn-glycerol 3-phosphate from glycerol: step 1/1. Functionally, key enzyme in the regulation of glycerol uptake and metabolism. Catalyzes the phosphorylation of glycerol to yield sn-glycerol 3-phosphate. In Halobacterium salinarum (strain ATCC 29341 / DSM 671 / R1), this protein is Glycerol kinase.